A 135-amino-acid polypeptide reads, in one-letter code: C-type natriuretic peptide (135 aa).

The N-terminal stretch at 1-25 (MSGHTSFYCGLLLLLLIQVQARPRA) is a signal peptide. A propeptide spanning residues 26–113 (DDSLQVLSRL…PLRFKGRSKK (88 aa)) is cleaved from the precursor. The interval 46-67 (EELNNEAQEISPAASLPDLNTD) is disordered. A disulfide bridge connects residues Cys119 and Cys135.

The protein belongs to the natriuretic peptide family.

The protein resides in the secreted. Hormone which may be vasoactive and natriuretic. Has a cGMP-stimulating activity. The chain is C-type natriuretic peptide from Squalus acanthias (Spiny dogfish).